Consider the following 274-residue polypeptide: Pyridoxal phosphate homeostasis protein (274 aa).

Ser-6 carries the phosphoserine modification. The residue at position 47 (Lys-47) is an N6-(pyridoxal phosphate)lysine. A Phosphotyrosine modification is found at Tyr-69. Lys-125 is modified (N6-succinyllysine). Phosphoserine is present on residues Ser-226 and Ser-244.

The protein belongs to the pyridoxal phosphate-binding protein YggS/PROSC family.

Pyridoxal 5'-phosphate (PLP)-binding protein, which may be involved in intracellular homeostatic regulation of pyridoxal 5'-phosphate (PLP), the active form of vitamin B6. In Mus musculus (Mouse), this protein is Pyridoxal phosphate homeostasis protein.